Reading from the N-terminus, the 311-residue chain is Probable manganese-dependent inorganic pyrophosphatase (311 aa).

Mn(2+) is bound by residues H9, D13, D15, D75, H97, and D149.

It belongs to the PPase class C family. Mn(2+) serves as cofactor.

It is found in the cytoplasm. It carries out the reaction diphosphate + H2O = 2 phosphate + H(+). The protein is Probable manganese-dependent inorganic pyrophosphatase of Lactobacillus helveticus (strain DPC 4571).